The chain runs to 53 residues: UPF0391 membrane protein KPK_4780 (53 aa).

A run of 2 helical transmembrane segments spans residues 4–24 (WGII…GGLA) and 30–47 (AAKI…VSLF).

Belongs to the UPF0391 family.

The protein localises to the cell membrane. The chain is UPF0391 membrane protein KPK_4780 from Klebsiella pneumoniae (strain 342).